A 75-amino-acid chain; its full sequence is MGSFSIWHWLIVLVIIALVFGTKKLRNVGSDLGSAVKGFKEGMKDASADKPADQVTQQRVSDDTIDVQAKEKSNS.

The chain crosses the membrane as a helical span at residues 1–21 (MGSFSIWHWLIVLVIIALVFG). The interval 45–75 (DASADKPADQVTQQRVSDDTIDVQAKEKSNS) is disordered.

This sequence belongs to the TatA/E family. In terms of assembly, the Tat system comprises two distinct complexes: a TatABC complex, containing multiple copies of TatA, TatB and TatC subunits, and a separate TatA complex, containing only TatA subunits. Substrates initially bind to the TatABC complex, which probably triggers association of the separate TatA complex to form the active translocon.

Its subcellular location is the cell inner membrane. In terms of biological role, part of the twin-arginine translocation (Tat) system that transports large folded proteins containing a characteristic twin-arginine motif in their signal peptide across membranes. TatA could form the protein-conducting channel of the Tat system. In Bordetella bronchiseptica (strain ATCC BAA-588 / NCTC 13252 / RB50) (Alcaligenes bronchisepticus), this protein is Sec-independent protein translocase protein TatA.